Reading from the N-terminus, the 1231-residue chain is Protein FAM193A (1231 aa).

A coiled-coil region spans residues 106 to 142 (CTEDMYSTLLQRYQRSEEELRKVAEEWLECQKRIDAY). The interval 249 to 272 (DYLSEMRPPSVSSASSGSGSSSPI) is disordered. Positions 258–270 (SVSSASSGSGSSS) are enriched in low complexity. Serine 293 carries the post-translational modification Phosphoserine. Disordered regions lie at residues 331–405 (NGGG…QAEQ), 633–703 (QSSS…APSF), 719–789 (SFCP…NQKE), 826–845 (LTKR…EREG), and 860–1174 (NSSE…SSLD). The segment covering 355–365 (EADDEDADGES) has biased composition (acidic residues). Position 648 is a phosphoserine (serine 648). Positions 676 to 691 (LAPLPALSPSALSPAS) are enriched in low complexity. The span at 761–773 (QQDDGDESADEDS) shows a compositional bias: acidic residues. Low complexity predominate over residues 776–785 (EHSSSTSTST). Residues 872-881 (AAKRARHKQR) are compositionally biased toward basic residues. Residues 877-973 (RHKQRKLEEK…ATESISNSEN (97 aa)) adopt a coiled-coil conformation. Residues 882–909 (KLEEKARLEAEARAREHLHHQEEQKQRE) show a composition bias toward basic and acidic residues. Residues 910 to 920 (EEEDEEEEDEE) are compositionally biased toward acidic residues. Positions 921 to 935 (QHFKEEFQRLQELQK) are enriched in basic and acidic residues. A compositionally biased stretch (basic residues) spans 937–946 (RAAKKKKKDR). The segment covering 962 to 979 (QAATESISNSENIHNGSL) has biased composition (polar residues). Phosphoserine occurs at positions 1136 and 1151. A compositionally biased stretch (basic residues) spans 1156 to 1166 (GKNKKNKKKKG).

The protein belongs to the FAM193 family.

The polypeptide is Protein FAM193A (Fam193a) (Mus musculus (Mouse)).